The primary structure comprises 200 residues: Protein GrpE (200 aa).

Acidic residues-rich tracts occupy residues M1 to D17 and A34 to D44. A disordered region spans residues M1–R49.

The protein belongs to the GrpE family. Homodimer.

Its subcellular location is the cytoplasm. In terms of biological role, participates actively in the response to hyperosmotic and heat shock by preventing the aggregation of stress-denatured proteins, in association with DnaK and GrpE. It is the nucleotide exchange factor for DnaK and may function as a thermosensor. Unfolded proteins bind initially to DnaJ; upon interaction with the DnaJ-bound protein, DnaK hydrolyzes its bound ATP, resulting in the formation of a stable complex. GrpE releases ADP from DnaK; ATP binding to DnaK triggers the release of the substrate protein, thus completing the reaction cycle. Several rounds of ATP-dependent interactions between DnaJ, DnaK and GrpE are required for fully efficient folding. The sequence is that of Protein GrpE from Rhodopirellula baltica (strain DSM 10527 / NCIMB 13988 / SH1).